Here is a 445-residue protein sequence, read N- to C-terminus: MTRQYFGTDGVRGKVGTSPITPDFVMRLGYAAGTVLTKSRKASSRPVVLIGKDTRISGYMLEAALEAGFSAAGVDVMLAGPMPTPAIAYLTRALRLSAGVVISASHNPYEDNGIKFFSASGNKLPDAIELEIEAALNEPMSCVASEKLGRAKRLDDARGRYIEFCKSTFPNELDLRGTKLVVDCAHGAAYHIAPDVFHELGAEVIAIGNQPNGFNINEGYGATAPAALVEAVRANQAHLGIALDGDADRLLVVDAAGRVYNGDELLYIMVKDRMRVRPIEGAVGTLMTNMALEVAFKEMGVGFARANVGDRYVLEVLRERGWQVGGEGSGHMLCLDKHTTGDGIVSALQILSALKRSGLSLAELTQDIEMFPQTLINVKVEPGFDWKKNKELLAEKEAVEAELGDKGRVLIRASGTEPLIRVMVEAKDADIADKMARRIAAKLSK.

The active-site Phosphoserine intermediate is the S105. S105, D244, D246, and D248 together coordinate Mg(2+). Residue S105 is modified to Phosphoserine.

The protein belongs to the phosphohexose mutase family. Requires Mg(2+) as cofactor. In terms of processing, activated by phosphorylation.

The enzyme catalyses alpha-D-glucosamine 1-phosphate = D-glucosamine 6-phosphate. Functionally, catalyzes the conversion of glucosamine-6-phosphate to glucosamine-1-phosphate. This is Phosphoglucosamine mutase from Janthinobacterium sp. (strain Marseille) (Minibacterium massiliensis).